Consider the following 339-residue polypeptide: Phenylalanine--tRNA ligase alpha subunit (339 aa).

E254 contacts Mg(2+).

Belongs to the class-II aminoacyl-tRNA synthetase family. Phe-tRNA synthetase alpha subunit type 1 subfamily. As to quaternary structure, tetramer of two alpha and two beta subunits. Requires Mg(2+) as cofactor.

The protein resides in the cytoplasm. The catalysed reaction is tRNA(Phe) + L-phenylalanine + ATP = L-phenylalanyl-tRNA(Phe) + AMP + diphosphate + H(+). In Clostridium beijerinckii (strain ATCC 51743 / NCIMB 8052) (Clostridium acetobutylicum), this protein is Phenylalanine--tRNA ligase alpha subunit.